The primary structure comprises 347 residues: ATP-dependent kinase YFH7 (347 aa).

33–41 (GPPGSGKST) lines the ATP pocket.

This sequence belongs to the YFH7 family.

In terms of biological role, ATP-dependent kinase that could be involved in endoplasmic reticulum membrane assembly. This chain is ATP-dependent kinase YFH7 (YFH7), found in Lachancea thermotolerans (strain ATCC 56472 / CBS 6340 / NRRL Y-8284) (Yeast).